We begin with the raw amino-acid sequence, 104 residues long: Ribonuclease P protein component 4 (104 aa).

Positions 57, 60, 83, and 86 each coordinate Zn(2+).

The protein belongs to the eukaryotic/archaeal RNase P protein component 4 family. Consists of a catalytic RNA component and at least 4-5 protein subunits. Zn(2+) is required as a cofactor.

It localises to the cytoplasm. The catalysed reaction is Endonucleolytic cleavage of RNA, removing 5'-extranucleotides from tRNA precursor.. In terms of biological role, part of ribonuclease P, a protein complex that generates mature tRNA molecules by cleaving their 5'-ends. The polypeptide is Ribonuclease P protein component 4 (Saccharolobus islandicus (strain M.16.27) (Sulfolobus islandicus)).